The sequence spans 100 residues: MIGLNHYLIVSGLLFCIGLAGMLKRKNILLLFFSTEIMLNAINIGFVAISKYTHNLDGQMFALFIISIAASEVAIGLGLVILWFKKFKSLDIDSLNAMKG.

The next 3 membrane-spanning stretches (helical) occupy residues 1 to 21 (MIGLNHYLIVSGLLFCIGLAG), 28 to 48 (ILLLFFSTEIMLNAINIGFVA), and 64 to 84 (FIISIAASEVAIGLGLVILWF).

Belongs to the complex I subunit 4L family. As to quaternary structure, NDH-1 is composed of 14 different subunits. Subunits NuoA, H, J, K, L, M, N constitute the membrane sector of the complex.

It localises to the cell inner membrane. The catalysed reaction is a quinone + NADH + 5 H(+)(in) = a quinol + NAD(+) + 4 H(+)(out). Functionally, NDH-1 shuttles electrons from NADH, via FMN and iron-sulfur (Fe-S) centers, to quinones in the respiratory chain. The immediate electron acceptor for the enzyme in this species is believed to be ubiquinone. Couples the redox reaction to proton translocation (for every two electrons transferred, four hydrogen ions are translocated across the cytoplasmic membrane), and thus conserves the redox energy in a proton gradient. The polypeptide is NADH-quinone oxidoreductase subunit K (Helicobacter pylori (strain ATCC 700392 / 26695) (Campylobacter pylori)).